Consider the following 234-residue polypeptide: Large ribosomal subunit protein uL1 (234 aa).

It belongs to the universal ribosomal protein uL1 family. In terms of assembly, part of the 50S ribosomal subunit.

Functionally, binds directly to 23S rRNA. The L1 stalk is quite mobile in the ribosome, and is involved in E site tRNA release. Protein L1 is also a translational repressor protein, it controls the translation of the L11 operon by binding to its mRNA. The chain is Large ribosomal subunit protein uL1 from Vibrio atlanticus (strain LGP32) (Vibrio splendidus (strain Mel32)).